Consider the following 148-residue polypeptide: MKKIFLTMTPLPYMNHLPENHYFLSLTVVISIIHLFTTCVPQHNHSTHFPYLNHARHLNHVLHPSHARHPNHVLHLNRVLHPNRVVHLNHVLHLNHVLHLNHVLHLNHVLHPNHVLHLNPILHPNHYLVSRYYPISRHYLHKIFRLFM.

A helical membrane pass occupies residues 22–40 (YFLSLTVVISIIHLFTTCV). The interval 43–141 (HNHSTHFPYL…YYPISRHYLH (99 aa)) is histidine-rich.

The protein resides in the host membrane. This is an uncharacterized protein from African swine fever virus (strain Badajoz 1971 Vero-adapted) (Ba71V).